Consider the following 706-residue polypeptide: MSIFNKVTKTFQWGQNTVTMETGEIARQASGAVLLDMDGTVVLATVVAKTEGKAGQDFFPLTVDYLEKTYAAGKIPGSFFKREGRPSEFETLTSRLIDRPIRPLFPEGFFNEVHVVVHTLSLNPEVDADIAALIAVSAALSVSGIPFSGPIGAARVGYINGEYVLNPGQTARKDSVMDLVVAGTEAAVLMVESEAQQLSEEIMLGAVVFGHEQGNIAINAIHELVRDAGKPVWDWKAPAKDEPLIAKVGALAAHKLEAAYQIRNKQARTRACREAYAVVMADLKLDGVAFDSVAVEGMLFDIEAKIVRSQILAGEPRIDGRDTRTVRPIEIRNSVLPRTHGSALFTRGETQALVVTTLGTERDAQRIDALSGDYEDRFMLHYNMPPFATGETGRVGTPKRREIGHGRLAKRALMAVLPSKEEFPYTMRVVSEITESNGSSSMASVCGGCLSLMDAGVPMKAHVAGIAMGLIKEENRFAVLTDILGDEDHLGDMDFKVAGTTNGITALQMDIKIQGITKEIMQVALAQAKEARMHILGKMQEAMAEAKTEVSTFAPRLFTMKINPDKIRDVIGKGGSVIRALTEETGTQINIDEDGTITIASADPAKAEEAKRRIQQITAEVEIGKIYEGPITKILDFGALVNLLPGKDGLLHISQIAHERVEKVTDYLSEGQIVKVKVMETDEKGRIKLSMKVLLDRPGQGGPEHV.

Residues Asp488 and Asp494 each contribute to the Mg(2+) site. One can recognise a KH domain in the interval 555 to 614; sequence PRLFTMKINPDKIRDVIGKGGSVIRALTEETGTQINIDEDGTITIASADPAKAEEAKRRI. Residues 624-692 form the S1 motif domain; it reads GKIYEGPITK…EKGRIKLSMK (69 aa).

The protein belongs to the polyribonucleotide nucleotidyltransferase family. Mg(2+) is required as a cofactor.

It localises to the cytoplasm. The catalysed reaction is RNA(n+1) + phosphate = RNA(n) + a ribonucleoside 5'-diphosphate. Involved in mRNA degradation. Catalyzes the phosphorolysis of single-stranded polyribonucleotides processively in the 3'- to 5'-direction. This is Polyribonucleotide nucleotidyltransferase from Albidiferax ferrireducens (strain ATCC BAA-621 / DSM 15236 / T118) (Rhodoferax ferrireducens).